The chain runs to 182 residues: CKLF-like MARVEL transmembrane domain-containing protein 3 (182 aa).

A compositionally biased stretch (acidic residues) spans 1-12; the sequence is MWPPDPDPDPDP. Residues 1–21 are disordered; sequence MWPPDPDPDPDPEPAGGSRPG. The 120-residue stretch at 36–155 folds into the MARVEL domain; it reads FLCSLKGRLL…DFYLIFNDVA (120 aa). Transmembrane regions (helical) follow at residues 64-84, 101-121, and 131-151; these read ASAF…FLFA, MDFL…ITAI, and AAGV…YLIF.

The protein belongs to the chemokine-like factor family. Expressed in the leukocytes, placenta and testis.

Its subcellular location is the membrane. The polypeptide is CKLF-like MARVEL transmembrane domain-containing protein 3 (CMTM3) (Homo sapiens (Human)).